The following is a 482-amino-acid chain: Glutamyl-tRNA(Gln) amidotransferase subunit A (482 aa).

Residues K75 and S150 each act as charge relay system in the active site. The active-site Acyl-ester intermediate is the S174.

It belongs to the amidase family. GatA subfamily. As to quaternary structure, heterotrimer of A, B and C subunits.

It catalyses the reaction L-glutamyl-tRNA(Gln) + L-glutamine + ATP + H2O = L-glutaminyl-tRNA(Gln) + L-glutamate + ADP + phosphate + H(+). Allows the formation of correctly charged Gln-tRNA(Gln) through the transamidation of misacylated Glu-tRNA(Gln) in organisms which lack glutaminyl-tRNA synthetase. The reaction takes place in the presence of glutamine and ATP through an activated gamma-phospho-Glu-tRNA(Gln). The polypeptide is Glutamyl-tRNA(Gln) amidotransferase subunit A (Rippkaea orientalis (strain PCC 8801 / RF-1) (Cyanothece sp. (strain PCC 8801))).